A 316-amino-acid polypeptide reads, in one-letter code: HPr kinase/phosphorylase (316 aa).

Active-site residues include His143 and Lys164. 158-165 (GEAGSGKS) is a binding site for ATP. Ser165 is a binding site for Mg(2+). The Proton acceptor; for phosphorylation activity. Proton donor; for dephosphorylation activity role is filled by Asp182. The interval 206-215 (LEVRGLGVLN) is important for the catalytic mechanism of both phosphorylation and dephosphorylation. Glu207 serves as a coordination point for Mg(2+). Residue Arg251 is part of the active site. Residues 272–277 (PVMPGR) form an important for the catalytic mechanism of dephosphorylation region.

It belongs to the HPrK/P family. Homohexamer. It depends on Mg(2+) as a cofactor.

The catalysed reaction is [HPr protein]-L-serine + ATP = [HPr protein]-O-phospho-L-serine + ADP + H(+). It carries out the reaction [HPr protein]-O-phospho-L-serine + phosphate + H(+) = [HPr protein]-L-serine + diphosphate. Functionally, catalyzes the ATP- as well as the pyrophosphate-dependent phosphorylation of a specific serine residue in HPr, a phosphocarrier protein of the phosphoenolpyruvate-dependent sugar phosphotransferase system (PTS). HprK/P also catalyzes the pyrophosphate-producing, inorganic phosphate-dependent dephosphorylation (phosphorolysis) of seryl-phosphorylated HPr (P-Ser-HPr). In Xanthomonas euvesicatoria pv. vesicatoria (strain 85-10) (Xanthomonas campestris pv. vesicatoria), this protein is HPr kinase/phosphorylase.